The sequence spans 336 residues: Phospho-N-acetylmuramoyl-pentapeptide-transferase (336 aa).

A run of 10 helical transmembrane segments spans residues 3 to 23 (LTLI…PYFI), 53 to 73 (GGTV…LFSI), 78 to 98 (SLAL…IGFL), 118 to 138 (LALQ…PSGI), 143 to 163 (VFGY…FWVV), 174 to 194 (GIDG…GVIA), 200 to 220 (FDVL…FCFN), 226 to 246 (VFMG…ISIA), 251 to 271 (WTLL…MLQV), and 316 to 336 (AFLW…LYVF).

The protein belongs to the glycosyltransferase 4 family. MraY subfamily. It depends on Mg(2+) as a cofactor.

It localises to the cell membrane. It carries out the reaction UDP-N-acetyl-alpha-D-muramoyl-L-alanyl-gamma-D-glutamyl-L-lysyl-D-alanyl-D-alanine + di-trans,octa-cis-undecaprenyl phosphate = Mur2Ac(oyl-L-Ala-gamma-D-Glu-L-Lys-D-Ala-D-Ala)-di-trans,octa-cis-undecaprenyl diphosphate + UMP. It participates in cell wall biogenesis; peptidoglycan biosynthesis. Functionally, catalyzes the initial step of the lipid cycle reactions in the biosynthesis of the cell wall peptidoglycan: transfers peptidoglycan precursor phospho-MurNAc-pentapeptide from UDP-MurNAc-pentapeptide onto the lipid carrier undecaprenyl phosphate, yielding undecaprenyl-pyrophosphoryl-MurNAc-pentapeptide, known as lipid I. This Streptococcus pyogenes serotype M49 (strain NZ131) protein is Phospho-N-acetylmuramoyl-pentapeptide-transferase.